Reading from the N-terminus, the 474-residue chain is Transmembrane transporter FVEG_12640 (474 aa).

Positions methionine 1–serine 15 are enriched in polar residues. Positions methionine 1–arginine 39 are disordered. 10 consecutive transmembrane segments (helical) span residues isoleucine 72–valine 92, leucine 133–serine 153, glycine 164–isoleucine 184, tryptophan 192–valine 212, tryptophan 231–isoleucine 251, alanine 275–tyrosine 295, valine 317–alanine 337, leucine 364–leucine 384, leucine 387–leucine 407, and leucine 431–isoleucine 451.

It belongs to the amino acid/polyamine transporter 2 family.

It is found in the membrane. In terms of biological role, transmembrane transporter; part of the Fusarium detoxification of benzoxazolinone cluster 2 (FDB2) involved in the degradation of benzoxazolinones produced by the host plant. Maize, wheat, and rye produce the 2 benzoxazinone phytoanticipins 2,4-dihy-droxy-7-methoxy-1,4-benzoxazin-3-one (DIMBOA) and 2,4-dihydroxy-1,4-benzoxazin-3-one (DIBOA) that, due to their inherent instability once released, spontaneously degrade to the more stable corresponding benzoxazolinones, 6-methoxy-2-benzoxazolinone (MBOA) and 2-benzoxazolinone (BOA), respectively. Might be involved in the transport of metabolites of benzoxazolinone degradation. The sequence is that of Transmembrane transporter FVEG_12640 from Gibberella moniliformis (strain M3125 / FGSC 7600) (Maize ear and stalk rot fungus).